The chain runs to 485 residues: Glutamyl-tRNA(Gln) amidotransferase subunit A (485 aa).

Active-site charge relay system residues include lysine 80 and serine 155. Residue serine 179 is the Acyl-ester intermediate of the active site.

The protein belongs to the amidase family. GatA subfamily. In terms of assembly, heterotrimer of A, B and C subunits.

The catalysed reaction is L-glutamyl-tRNA(Gln) + L-glutamine + ATP + H2O = L-glutaminyl-tRNA(Gln) + L-glutamate + ADP + phosphate + H(+). Its function is as follows. Allows the formation of correctly charged Gln-tRNA(Gln) through the transamidation of misacylated Glu-tRNA(Gln) in organisms which lack glutaminyl-tRNA synthetase. The reaction takes place in the presence of glutamine and ATP through an activated gamma-phospho-Glu-tRNA(Gln). In Leptospira borgpetersenii serovar Hardjo-bovis (strain L550), this protein is Glutamyl-tRNA(Gln) amidotransferase subunit A.